A 119-amino-acid chain; its full sequence is Large ribosomal subunit protein uL18 (119 aa).

It belongs to the universal ribosomal protein uL18 family. In terms of assembly, part of the 50S ribosomal subunit; part of the 5S rRNA/L5/L18/L25 subcomplex. Contacts the 5S and 23S rRNAs.

This is one of the proteins that bind and probably mediate the attachment of the 5S RNA into the large ribosomal subunit, where it forms part of the central protuberance. The sequence is that of Large ribosomal subunit protein uL18 from Roseobacter denitrificans (strain ATCC 33942 / OCh 114) (Erythrobacter sp. (strain OCh 114)).